Here is a 154-residue protein sequence, read N- to C-terminus: 3-dehydroquinate dehydratase 2 (154 aa).

Catalysis depends on Y23, which acts as the Proton acceptor. N79, H85, and D92 together coordinate substrate. H105 serves as the catalytic Proton donor. Substrate is bound by residues 106–107 (IS) and R116.

Belongs to the type-II 3-dehydroquinase family. As to quaternary structure, homododecamer.

The catalysed reaction is 3-dehydroquinate = 3-dehydroshikimate + H2O. It functions in the pathway metabolic intermediate biosynthesis; chorismate biosynthesis; chorismate from D-erythrose 4-phosphate and phosphoenolpyruvate: step 3/7. Functionally, catalyzes a trans-dehydration via an enolate intermediate. The polypeptide is 3-dehydroquinate dehydratase 2 (aroQ2) (Ralstonia nicotianae (strain ATCC BAA-1114 / GMI1000) (Ralstonia solanacearum)).